Here is a 504-residue protein sequence, read N- to C-terminus: Subtilisin-like protease 1 (504 aa).

Residues 1–19 form the signal peptide; the sequence is MGVFRFISISLAAVSAANA. Positions 20–116 are excised as a propeptide; that stretch reads AQILSMPHAQ…VEPDTIVSVH (97 aa). The 83-residue stretch at 34-116 folds into the Inhibitor I9 domain; sequence SYIVMMKDDT…VEPDTIVSVH (83 aa). The Peptidase S8 domain occupies 126-400; that stretch reads SWGLARISNP…NVLINNGGAK (275 aa). Catalysis depends on charge relay system residues D158 and H190. A disordered region spans residues 172-198; it reads AIWGSNQVNDGDDRDGSGHGTHTSGTM. N-linked (GlcNAc...) asparagine glycans are attached at residues N233 and N251. The segment covering 282–294 has biased composition (polar residues); it reads NDNQDAQSSSPAS. Residues 282–312 form a disordered region; the sequence is NDNQDAQSSSPASEPSVCTVGSSAEDDSRSS. S345 functions as the Charge relay system in the catalytic mechanism. A compositionally biased stretch (polar residues) spans 378 to 394; the sequence is TSSITDAGPGTPTNVLI. The tract at residues 378–483 is disordered; it reads TSSITDAGPG…YPGGDNFDFD (106 aa). Pro residues-rich tracts occupy residues 405–449 and 457–473; these read NPNP…PGQP and APAP…PHTP.

Belongs to the peptidase S8 family.

It localises to the secreted. Its function is as follows. Secreted subtilisin-like serine protease with keratinolytic activity that contributes to pathogenicity. The protein is Subtilisin-like protease 1 (SUB1) of Trichophyton rubrum (Athlete's foot fungus).